The chain runs to 264 residues: ELL-associated factor 2 (264 aa).

Disordered regions lie at residues 114–154 (EGSS…PSSP) and 169–264 (MDQL…DSDD). A compositionally biased stretch (polar residues) spans 117-142 (SKVQSRIEQQQQQIRNSSKTPNNIKN). A compositionally biased stretch (low complexity) spans 173–196 (SSSDSSSDSKSSSSSSSSSENSSS). Basic and acidic residues predominate over residues 228-238 (VPDKDASHNRS). A compositionally biased stretch (polar residues) spans 239–264 (QENSGHMMNTLRSDLQLSESGSDSDD).

It belongs to the EAF family.

The protein resides in the nucleus speckle. Its function is as follows. May act as a transcriptional transactivator. The sequence is that of ELL-associated factor 2 (EAF2) from Gallus gallus (Chicken).